The sequence spans 450 residues: Chromosomal replication initiator protein DnaA (450 aa).

Residues 1-71 (MEDVWLQAQS…SVRSLTDSHF (71 aa)) are domain I, interacts with DnaA modulators. The tract at residues 71–113 (FQVELQVAARQQEKTAKSPRKSHTEDELGPVESEKCAPAEFST) is domain II. Positions 82–103 (QEKTAKSPRKSHTEDELGPVES) are disordered. The segment at 114–330 (NLNAKYTFDT…GMLIRLGAVA (217 aa)) is domain III, AAA+ region. Positions 158, 160, 161, and 162 each coordinate ATP. Residues 331-450 (SLTGKNITLD…IETLRKGLLN (120 aa)) form a domain IV, binds dsDNA region.

This sequence belongs to the DnaA family. As to quaternary structure, oligomerizes as a right-handed, spiral filament on DNA at oriC.

It localises to the cytoplasm. Plays an essential role in the initiation and regulation of chromosomal replication. ATP-DnaA binds to the origin of replication (oriC) to initiate formation of the DNA replication initiation complex once per cell cycle. Binds the DnaA box (a 9 base pair repeat at the origin) and separates the double-stranded (ds)DNA. Forms a right-handed helical filament on oriC DNA; dsDNA binds to the exterior of the filament while single-stranded (ss)DNA is stabiized in the filament's interior. The ATP-DnaA-oriC complex binds and stabilizes one strand of the AT-rich DNA unwinding element (DUE), permitting loading of DNA polymerase. After initiation quickly degrades to an ADP-DnaA complex that is not apt for DNA replication. Binds acidic phospholipids. The chain is Chromosomal replication initiator protein DnaA from Geobacter metallireducens (strain ATCC 53774 / DSM 7210 / GS-15).